Here is a 182-residue protein sequence, read N- to C-terminus: Small ribosomal subunit protein uS4 (182 aa).

Disordered regions lie at residues 1–23 (MGHPKKPRKQYDTPSHPWNADRI) and 158–182 (SSVAKQFETQETEEVAAEEEPKDEE). The 68-residue stretch at 103-170 (RRLQSLVFKR…AKQFETQETE (68 aa)) folds into the S4 RNA-binding domain. The span at 167-182 (QETEEVAAEEEPKDEE) shows a compositional bias: acidic residues.

Belongs to the universal ribosomal protein uS4 family. In terms of assembly, part of the 30S ribosomal subunit. Contacts protein S5. The interaction surface between S4 and S5 is involved in control of translational fidelity.

One of the primary rRNA binding proteins, it binds directly to 16S rRNA where it nucleates assembly of the body of the 30S subunit. Functionally, with S5 and S12 plays an important role in translational accuracy. The sequence is that of Small ribosomal subunit protein uS4 from Methanosphaera stadtmanae (strain ATCC 43021 / DSM 3091 / JCM 11832 / MCB-3).